Here is a 188-residue protein sequence, read N- to C-terminus: Protein SSX1 (188 aa).

Disordered stretches follow at residues 1 to 22 (MNGD…EKRS) and 111 to 188 (IMPK…EDDE). The KRAB-related domain maps to 20–83 (KRSKAFDDIA…KQATDFQGND (64 aa)). Basic and acidic residues predominate over residues 115–125 (KPAEDENDSKG). Residue Ser123 is modified to Phosphoserine. A compositionally biased stretch (basic residues) spans 153–170 (KRSGPKRGKHAWTHRLRE). Residues 179–188 (EISDPEEDDE) show a composition bias toward acidic residues.

Belongs to the SSX family. In terms of tissue distribution, expressed at high level in the testis. Expressed at low level in thyroid. Not detected in tonsil, colon, lung, spleen, prostate, kidney, striated and smooth muscles. Detected in rhabdomyosarcoma and fibrosarcoma cell lines. Not detected in mesenchymal and epithelial cell lines. Expressed in testis.

It is found in the cytoplasm. The protein localises to the cytoskeleton. Its subcellular location is the flagellum axoneme. In terms of biological role, could act as a modulator of transcription. Plays a role in spermatogenesis. This chain is Protein SSX1 (SSX1), found in Homo sapiens (Human).